The following is a 114-amino-acid chain: Photosystem II reaction center Psb28 protein (114 aa).

The protein belongs to the Psb28 family. Part of the photosystem II complex.

It localises to the plastid. The protein localises to the chloroplast thylakoid membrane. The protein is Photosystem II reaction center Psb28 protein of Thalassiosira pseudonana (Marine diatom).